Consider the following 700-residue polypeptide: Elongation factor G (700 aa).

Residues 10-286 form the tr-type G domain; it reads KKVRNIGIMA…AVIDYLPSPL (277 aa). GTP-binding positions include 19–26, 83–87, and 137–140; these read AHIDAGKT, DTPGH, and NKMD.

Belongs to the TRAFAC class translation factor GTPase superfamily. Classic translation factor GTPase family. EF-G/EF-2 subfamily.

It is found in the cytoplasm. Its function is as follows. Catalyzes the GTP-dependent ribosomal translocation step during translation elongation. During this step, the ribosome changes from the pre-translocational (PRE) to the post-translocational (POST) state as the newly formed A-site-bound peptidyl-tRNA and P-site-bound deacylated tRNA move to the P and E sites, respectively. Catalyzes the coordinated movement of the two tRNA molecules, the mRNA and conformational changes in the ribosome. The chain is Elongation factor G from Nocardia farcinica (strain IFM 10152).